The chain runs to 211 residues: Glutathione S-transferase class-mu 28 kDa isozyme (211 aa).

Residue A2 is modified to N-acetylalanine. One can recognise a GST N-terminal domain in the interval 4–86 (EHIKVIYFDG…YMAKKHHMMG (83 aa)). Residues Y10, 10–11 (YF), R16, 41–45 (WPKIK), L53, 55–56 (AV), and 70–71 (ES) contribute to the glutathione site. One can recognise a GST C-terminal domain in the interval 88–211 (TDEEYYSVEK…YLSNRPATPF (124 aa)).

It belongs to the GST superfamily. Mu family. In terms of assembly, homodimer. As to expression, in the adult, expressed in excretory epithelial cells but absent from the caecal epithelium and flame cells. Also expressed in the tegument and its extensions into the parenchyma. In the schistosomulum, expressed in the tegument and associated structures. Not expressed in digestive tract, reproductive organs or muscles (at protein level).

It catalyses the reaction RX + glutathione = an S-substituted glutathione + a halide anion + H(+). Functionally, conjugation of reduced glutathione to a wide number of exogenous and endogenous hydrophobic electrophiles. GST isoenzymes appear to play a central role in the parasite detoxification system. Other functions are also suspected including a role in increasing the solubility of haematin in the parasite gut. This is Glutathione S-transferase class-mu 28 kDa isozyme (GST28) from Schistosoma mansoni (Blood fluke).